A 141-amino-acid chain; its full sequence is Nucleoside diphosphate kinase (141 aa).

Residues K9, F57, R85, T91, R102, and N112 each coordinate ATP. The Pros-phosphohistidine intermediate role is filled by H115.

Belongs to the NDK family. As to quaternary structure, homotetramer. The cofactor is Mg(2+).

The protein localises to the cytoplasm. It catalyses the reaction a 2'-deoxyribonucleoside 5'-diphosphate + ATP = a 2'-deoxyribonucleoside 5'-triphosphate + ADP. It carries out the reaction a ribonucleoside 5'-diphosphate + ATP = a ribonucleoside 5'-triphosphate + ADP. Functionally, major role in the synthesis of nucleoside triphosphates other than ATP. The ATP gamma phosphate is transferred to the NDP beta phosphate via a ping-pong mechanism, using a phosphorylated active-site intermediate. The polypeptide is Nucleoside diphosphate kinase (Chlamydia muridarum (strain MoPn / Nigg)).